A 49-amino-acid polypeptide reads, in one-letter code: Sperm protamine P1 (49 aa).

This sequence belongs to the protamine P1 family. As to expression, testis.

It is found in the nucleus. It localises to the chromosome. Its function is as follows. Protamines substitute for histones in the chromatin of sperm during the haploid phase of spermatogenesis. They compact sperm DNA into a highly condensed, stable and inactive complex. The chain is Sperm protamine P1 (PRM1) from Rhinopoma hardwickii (Lesser mouse-tailed bat).